We begin with the raw amino-acid sequence, 225 residues long: MADS-box transcription factor 5 (225 aa).

One can recognise an MADS-box domain in the interval 1 to 61; that stretch reads MGRGKVELKR…GRLFEFSTSS (61 aa). A K-box domain is found at 89–179; that stretch reads ELSNYQEYLK…KRKIQETSGE (91 aa).

In terms of assembly, may interact with the K-box of MADS6.

Its subcellular location is the nucleus. Probable transcription factor. In Oryza sativa subsp. indica (Rice), this protein is MADS-box transcription factor 5 (MADS5).